The primary structure comprises 219 residues: ATP phosphoribosyltransferase (219 aa).

Belongs to the ATP phosphoribosyltransferase family. Short subfamily. In terms of assembly, heteromultimer composed of HisG and HisZ subunits.

The protein localises to the cytoplasm. The catalysed reaction is 1-(5-phospho-beta-D-ribosyl)-ATP + diphosphate = 5-phospho-alpha-D-ribose 1-diphosphate + ATP. It participates in amino-acid biosynthesis; L-histidine biosynthesis; L-histidine from 5-phospho-alpha-D-ribose 1-diphosphate: step 1/9. In terms of biological role, catalyzes the condensation of ATP and 5-phosphoribose 1-diphosphate to form N'-(5'-phosphoribosyl)-ATP (PR-ATP). Has a crucial role in the pathway because the rate of histidine biosynthesis seems to be controlled primarily by regulation of HisG enzymatic activity. In Paramagnetospirillum magneticum (strain ATCC 700264 / AMB-1) (Magnetospirillum magneticum), this protein is ATP phosphoribosyltransferase.